The chain runs to 137 residues: Nucleoside diphosphate kinase (137 aa).

Residues Lys-9, Phe-57, Arg-85, Thr-91, Arg-102, and Asn-112 each contribute to the ATP site. His-115 functions as the Pros-phosphohistidine intermediate in the catalytic mechanism.

The protein belongs to the NDK family. Homotetramer. It depends on Mg(2+) as a cofactor.

It localises to the cytoplasm. It carries out the reaction a 2'-deoxyribonucleoside 5'-diphosphate + ATP = a 2'-deoxyribonucleoside 5'-triphosphate + ADP. The catalysed reaction is a ribonucleoside 5'-diphosphate + ATP = a ribonucleoside 5'-triphosphate + ADP. Its function is as follows. Major role in the synthesis of nucleoside triphosphates other than ATP. The ATP gamma phosphate is transferred to the NDP beta phosphate via a ping-pong mechanism, using a phosphorylated active-site intermediate. In Campylobacter jejuni subsp. jejuni serotype O:2 (strain ATCC 700819 / NCTC 11168), this protein is Nucleoside diphosphate kinase.